The sequence spans 944 residues: MSDYKSTLNLPETGFPMRGDLAKREPGMLARWTDDDLYGIIRAAKKGKKTFILHDGPPYANGSIHIGHSVNKILKDIIVKSKGLSGFDSPYVPGWDCHGLPIELKVEQEFGKPGEKFTAAEFRAKCREYAATQVDGQRKDFIRLGVLGDWSHPYLTMDFKTEANIIRALGRIIKNGHLHKGAKPVHWCVDCRSALAEAEVEYYDKTSPSIDVAFRAVDQDAVKAKFGLPGVSGPVSLVIWTTTPWTLPANRAISLAPDFDYALVQIDGQAVILAKDLVESVMQRIGAAEYTILGTVKGAELELLRFTHPFMGFDVPAILGDHVTLDAGTGAVHTAPGHGPDDYVIGQKYGLETANPVGPDGAYLPGTYPTLDGVNVFKANDIVIELLKEKGALLHVEKMQHSYPCCWRHKTPIIFRATPQWFVSMDKEGLRQQSLKEIKGVQWIPDWGQARIESMVANRPDWCISRQRTWGVPMSLFVHKETQELLPIERTLAAMEEVAKRVEVDGIQAWWDLDPKEILGEDADQYEKVPDTLDVWFDSGSTSYSVVDARPEFAGHAADMYLEGSDQHRGWFMSSLMISVAMKGKAPYRQVLTHGFTVDGQGRKMSKSIGNTVSPQDVMNKLGADILRLWVASTDYTGEMAVSDEILKRAADSYRRIRNTARFLLANLNGFNPATDMVKPEEMVVLDRWAVGCAKTAQQEILKAYEAYDFHEVVQRLMRFCSVEMGSFYLDIIKDRQYTAKADSVARRSCQTALYHIAEALVRWMAPIMSFTADEIWGYLLGEREKYVFTGEWYDGLFGLEENEEFNDAFWDDVRYIKDQINKELENQKANGIKSNLEAKVTLKYADDANGTIKKLKLLGEEVRFIFITSQFVISEQAGGIDDENIQYNAGNTTVQAVVTRAEGDKCPRCWHYTTDVGKVAEHADICGRCVSNIAGNGEQRKFA.

The 'HIGH' region signature appears at 58 to 68; it reads PYANGSIHIGH. L-isoleucyl-5'-AMP is bound at residue Glu-563. Residues 604 to 608 carry the 'KMSKS' region motif; that stretch reads KMSKS. Position 607 (Lys-607) interacts with ATP. 4 residues coordinate Zn(2+): Cys-907, Cys-910, Cys-927, and Cys-930.

The protein belongs to the class-I aminoacyl-tRNA synthetase family. IleS type 1 subfamily. As to quaternary structure, monomer. Zn(2+) is required as a cofactor.

It localises to the cytoplasm. It carries out the reaction tRNA(Ile) + L-isoleucine + ATP = L-isoleucyl-tRNA(Ile) + AMP + diphosphate. Functionally, catalyzes the attachment of isoleucine to tRNA(Ile). As IleRS can inadvertently accommodate and process structurally similar amino acids such as valine, to avoid such errors it has two additional distinct tRNA(Ile)-dependent editing activities. One activity is designated as 'pretransfer' editing and involves the hydrolysis of activated Val-AMP. The other activity is designated 'posttransfer' editing and involves deacylation of mischarged Val-tRNA(Ile). The chain is Isoleucine--tRNA ligase from Salmonella paratyphi A (strain ATCC 9150 / SARB42).